Consider the following 434-residue polypeptide: Glutamyl-tRNA reductase (434 aa).

Substrate-binding positions include 49 to 52 (TCNR), Ser-109, 114 to 116 (EPQ), and Gln-120. Cys-50 (nucleophile) is an active-site residue. An NADP(+)-binding site is contributed by 189–194 (GAGEMC).

The protein belongs to the glutamyl-tRNA reductase family. As to quaternary structure, homodimer.

It carries out the reaction (S)-4-amino-5-oxopentanoate + tRNA(Glu) + NADP(+) = L-glutamyl-tRNA(Glu) + NADPH + H(+). The protein operates within porphyrin-containing compound metabolism; protoporphyrin-IX biosynthesis; 5-aminolevulinate from L-glutamyl-tRNA(Glu): step 1/2. In terms of biological role, catalyzes the NADPH-dependent reduction of glutamyl-tRNA(Glu) to glutamate 1-semialdehyde (GSA). This chain is Glutamyl-tRNA reductase, found in Geobacter sulfurreducens (strain ATCC 51573 / DSM 12127 / PCA).